We begin with the raw amino-acid sequence, 115 residues long: MKINTLQSLINQQITQVGHGGQAGRLTETNPLTENSHQISTAEKAFASEVLEHVKNTALSRHDIACLLPRVSNLELKQGKAGEVIVTGLRTEQLSLSDAKLLLEAAMRQDTAADG.

The disordered stretch occupies residues His19–Ile39. Residues Thr27 to Ile39 are compositionally biased toward polar residues.

In terms of biological role, belongs to an operon involved in the translocation of Yop proteins across the bacterial membranes or in the specific control of this function. In Yersinia enterocolitica, this protein is Yop proteins translocation protein M (yscM).